The sequence spans 56 residues: U-limacoditoxin(3)-Dv21 (56 aa).

The first 19 residues, 1-19 (MKKVIMLLLIFALFAYALS), serve as a signal peptide directing secretion. 3 disulfide bridges follow: Cys-26–Cys-41, Cys-33–Cys-46, and Cys-40–Cys-53.

It belongs to the limacoditoxin-22 family. Expressed by the venom secretory cell of the spine. The spine is a cuticular structure containing a single large nucleated venom-secreting cell at its base. It is an independent unit capable of producing, storing and injecting venom. On the back of D.vulnerans caterpillars, spines are grouped together by 50 to 100 to form scoli, of which there are eight in D.vulnerans.

Its subcellular location is the secreted. Functionally, probable toxin. Shows a moderate antiparasitic activity against the major pathogenic nematode of ruminants (H.contortus, IC(50)=22.1 uM). Does not show insecticidal activities. Does not induce increase in intracellular calcium in mouse DRG neurons, suggesting that it does not induce pain. This chain is U-limacoditoxin(3)-Dv21, found in Doratifera vulnerans (Mottled cup moth).